Reading from the N-terminus, the 365-residue chain is Metallophosphoesterase 1 homolog (365 aa).

Residues 10-30 traverse the membrane as a helical segment; sequence PILLAIILVVYNEYFIFFIAF. Residues Asp54, Asp96, Asn132, His208, His262, and His264 each coordinate a divalent metal cation. The helical transmembrane segment at 319–339 threads the bilayer; that stretch reads ILQIMVYIFGGIGIVILAFIL.

This sequence belongs to the metallophosphoesterase superfamily. MPPE1 family. The cofactor is Mn(2+).

The protein localises to the endoplasmic reticulum-Golgi intermediate compartment membrane. It localises to the golgi apparatus. It is found in the cis-Golgi network membrane. Functionally, metallophosphoesterase required for transport of GPI-anchor proteins from the endoplasmic reticulum to the Golgi. Acts in lipid remodeling steps of GPI-anchor maturation by mediating the removal of a side-chain ethanolamine-phosphate (EtNP) from the second Man (Man2) of the GPI intermediate, an essential step for efficient transport of GPI-anchor proteins. This Caenorhabditis elegans protein is Metallophosphoesterase 1 homolog.